We begin with the raw amino-acid sequence, 115 residues long: ATP-dependent Clp protease adapter protein ClpS (115 aa).

It belongs to the ClpS family. As to quaternary structure, binds to the N-terminal domain of the chaperone ClpA.

Functionally, involved in the modulation of the specificity of the ClpAP-mediated ATP-dependent protein degradation. The chain is ATP-dependent Clp protease adapter protein ClpS from Leptothrix cholodnii (strain ATCC 51168 / LMG 8142 / SP-6) (Leptothrix discophora (strain SP-6)).